The following is a 244-amino-acid chain: 1-(5-phosphoribosyl)-5-[(5-phosphoribosylamino)methylideneamino] imidazole-4-carboxamide isomerase (244 aa).

Asp10 acts as the Proton acceptor in catalysis. The active-site Proton donor is the Asp132.

The protein belongs to the HisA/HisF family.

It is found in the cytoplasm. It catalyses the reaction 1-(5-phospho-beta-D-ribosyl)-5-[(5-phospho-beta-D-ribosylamino)methylideneamino]imidazole-4-carboxamide = 5-[(5-phospho-1-deoxy-D-ribulos-1-ylimino)methylamino]-1-(5-phospho-beta-D-ribosyl)imidazole-4-carboxamide. It participates in amino-acid biosynthesis; L-histidine biosynthesis; L-histidine from 5-phospho-alpha-D-ribose 1-diphosphate: step 4/9. This chain is 1-(5-phosphoribosyl)-5-[(5-phosphoribosylamino)methylideneamino] imidazole-4-carboxamide isomerase, found in Xanthomonas euvesicatoria pv. vesicatoria (strain 85-10) (Xanthomonas campestris pv. vesicatoria).